A 103-amino-acid chain; its full sequence is Large ribosomal subunit protein bL21 (103 aa).

This sequence belongs to the bacterial ribosomal protein bL21 family. In terms of assembly, part of the 50S ribosomal subunit. Contacts protein L20.

In terms of biological role, this protein binds to 23S rRNA in the presence of protein L20. In Bordetella parapertussis (strain 12822 / ATCC BAA-587 / NCTC 13253), this protein is Large ribosomal subunit protein bL21.